The following is a 326-amino-acid chain: N-acetyl-gamma-glutamyl-phosphate reductase (326 aa).

Cys-155 is an active-site residue.

This sequence belongs to the NAGSA dehydrogenase family. Type 1 subfamily.

Its subcellular location is the cytoplasm. The catalysed reaction is N-acetyl-L-glutamate 5-semialdehyde + phosphate + NADP(+) = N-acetyl-L-glutamyl 5-phosphate + NADPH + H(+). It participates in amino-acid biosynthesis; L-arginine biosynthesis; N(2)-acetyl-L-ornithine from L-glutamate: step 3/4. In terms of biological role, catalyzes the NADPH-dependent reduction of N-acetyl-5-glutamyl phosphate to yield N-acetyl-L-glutamate 5-semialdehyde. This chain is N-acetyl-gamma-glutamyl-phosphate reductase, found in Shewanella sp. (strain MR-4).